A 126-amino-acid chain; its full sequence is Large ribosomal subunit protein bL17 (126 aa).

Belongs to the bacterial ribosomal protein bL17 family. In terms of assembly, part of the 50S ribosomal subunit. Contacts protein L32.

The sequence is that of Large ribosomal subunit protein bL17 from Limosilactobacillus fermentum (strain NBRC 3956 / LMG 18251) (Lactobacillus fermentum).